The primary structure comprises 111 residues: NADH-ubiquinone oxidoreductase chain 4 (111 aa).

Residues 35 to 55 (LITSLFSWLDITVFLTGLSAF) traverse the membrane as a helical segment.

It belongs to the complex I subunit 4 family.

The protein resides in the mitochondrion membrane. It catalyses the reaction a ubiquinone + NADH + 5 H(+)(in) = a ubiquinol + NAD(+) + 4 H(+)(out). Core subunit of the mitochondrial membrane respiratory chain NADH dehydrogenase (Complex I) that is believed to belong to the minimal assembly required for catalysis. Complex I functions in the transfer of electrons from NADH to the respiratory chain. The immediate electron acceptor for the enzyme is believed to be ubiquinone. This Caiman crocodilus (Spectacled caiman) protein is NADH-ubiquinone oxidoreductase chain 4 (MT-ND4).